The primary structure comprises 383 residues: MPAFKSRIESALADRKAQGLNRSINVVFSGNQSILECEGRRYINFSSNDYLGLANDQALVRAWQQGLSVYGSGSGASPMVTGFSAAHSNLEAALTEWLGYERAILFGSGFSANQALLLTLLEKSDVLIQDRLNHASLMEAGMLSPAKMKRFKHNDIAHLNSLLSSEDNHLVVTEGVFSMDGDCAPLADIAEVTSSHDAWFAVDDAHGIGVLGESGGGSCELAKVKPELLIVTFGKAFGMSGAAILCDHATGDFLTQFARHHVYSTAIPPAQAYALTHAVSMIQEQSWRREKLTELNEAYRDGLQDLDGFVETQTSIKPFMIGESELALQVASACRQNGIWVTAIRPPTVPKGTSRLRITLTANHTNEQIKTLSMALKQALGAL.

A substrate-binding site is contributed by R22. Position 109–110 (109–110) interacts with pyridoxal 5'-phosphate; sequence GF. H134 is a binding site for substrate. Residues S178, H206, and T232 each contribute to the pyridoxal 5'-phosphate site. N6-(pyridoxal phosphate)lysine is present on K235. T348 is a binding site for substrate.

Belongs to the class-II pyridoxal-phosphate-dependent aminotransferase family. BioF subfamily. Homodimer. Pyridoxal 5'-phosphate is required as a cofactor.

The enzyme catalyses 6-carboxyhexanoyl-[ACP] + L-alanine + H(+) = (8S)-8-amino-7-oxononanoate + holo-[ACP] + CO2. The protein operates within cofactor biosynthesis; biotin biosynthesis. Catalyzes the decarboxylative condensation of pimeloyl-[acyl-carrier protein] and L-alanine to produce 8-amino-7-oxononanoate (AON), [acyl-carrier protein], and carbon dioxide. This chain is 8-amino-7-oxononanoate synthase, found in Vibrio campbellii (strain ATCC BAA-1116).